A 121-amino-acid polypeptide reads, in one-letter code: uncharacterized protein (121 aa).

2 disordered regions span residues 1 to 28 (MGCA…QNGD) and 60 to 82 (QENL…VPGL). Phosphoserine is present on residues serine 95 and serine 115.

In terms of tissue distribution, expressed in spleen, prostate, testis and uterus.

This is an uncharacterized protein from Homo sapiens (Human).